A 217-amino-acid chain; its full sequence is Growth hormone variant (217 aa).

Positions 1–26 (MAAGSRTSLLLAFGLLCLPWLQEGSA) are cleaved as a signal peptide. Disulfide bonds link C79–C191 and C208–C215. Residue S132 is modified to Phosphoserine. N166 carries an N-linked (GlcNAc...) asparagine glycan. S176 bears the Phosphoserine mark.

This sequence belongs to the somatotropin/prolactin family. Expressed in the placenta.

The protein localises to the secreted. Functionally, plays an important role in growth control. Its major role in stimulating body growth is to stimulate the liver and other tissues to secrete IGF1. It stimulates both the differentiation and proliferation of myoblasts. It also stimulates amino acid uptake and protein synthesis in muscle and other tissues. The protein is Growth hormone variant (GH2) of Pan troglodytes (Chimpanzee).